The chain runs to 720 residues: Inactive serine protease PAMR1 (720 aa).

The N-terminal stretch at 1–21 (MELGCWTQLGLTFLQLLLISS) is a signal peptide. Intrachain disulfides connect cysteine 128-cysteine 150, cysteine 177-cysteine 199, cysteine 239-cysteine 250, cysteine 244-cysteine 260, cysteine 262-cysteine 271, cysteine 280-cysteine 329, cysteine 315-cysteine 342, cysteine 414-cysteine 442, and cysteine 489-cysteine 505. One can recognise a CUB domain in the interval 128–236 (CGQVLRAPKG…DGFHAIYEEI (109 aa)). One can recognise an EGF-like domain in the interval 235–272 (EITACSSSPCFHDGTCVLDKAGSYKCACLAGYTGQRCE). 2 consecutive Sushi domains span residues 278-344 (RNCS…ICIK) and 387-444 (APTK…SCIP). The region spanning 445-720 (ICGKIENITA…FKDWIERNMK (276 aa)) is the Peptidase S1 domain. The N-linked (GlcNAc...) asparagine glycan is linked to asparagine 614. 2 disulfides stabilise this stretch: cysteine 630–cysteine 649 and cysteine 661–cysteine 697.

Belongs to the peptidase S1 family.

Its subcellular location is the secreted. In terms of biological role, may play a role in regeneration of skeletal muscle. In Homo sapiens (Human), this protein is Inactive serine protease PAMR1 (PAMR1).